A 225-amino-acid polypeptide reads, in one-letter code: THAP domain-containing protein 1 B (225 aa).

The THAP-type zinc finger occupies 5–57 (CSAYGCKNRYDKDRPISFHKFPLKRPLLCKKWEAAVRRADFKPTKYSSICSDH). Residues 139–194 (VEDTVHQRRRIQQLEEQVDKLRKKLKIANQKCRRQERSLEKLEKEVSEYREAKGSG) are a coiled coil.

It belongs to the THAP1 family.

It localises to the nucleus. The protein resides in the nucleoplasm. DNA-binding transcription regulator that regulates endothelial cell proliferation and G1/S cell-cycle progression. Specifically binds the 5'-[AT]NTNN[GT]GGCA[AGT]-3' core DNA sequence and acts by modulating expression of pRB-E2F cell-cycle target genes. This is THAP domain-containing protein 1 B (thap1-b) from Xenopus laevis (African clawed frog).